A 79-amino-acid polypeptide reads, in one-letter code: Small ribosomal subunit protein uS11 (79 aa).

Position 14 is a phosphoserine (Ser-14). Glycyl lysine isopeptide (Lys-Gly) (interchain with G-Cter in SUMO2) cross-links involve residues Lys-59 and Lys-61.

This sequence belongs to the universal ribosomal protein uS11 family. Component of the small ribosomal subunit. Part of the small subunit (SSU) processome, composed of more than 70 proteins and the RNA chaperone small nucleolar RNA (snoRNA) U3.

It localises to the cytoplasm. Its subcellular location is the nucleus. It is found in the nucleolus. Its function is as follows. Component of the small ribosomal subunit. The ribosome is a large ribonucleoprotein complex responsible for the synthesis of proteins in the cell. Part of the small subunit (SSU) processome, first precursor of the small eukaryotic ribosomal subunit. During the assembly of the SSU processome in the nucleolus, many ribosome biogenesis factors, an RNA chaperone and ribosomal proteins associate with the nascent pre-rRNA and work in concert to generate RNA folding, modifications, rearrangements and cleavage as well as targeted degradation of pre-ribosomal RNA by the RNA exosome. The polypeptide is Small ribosomal subunit protein uS11 (RPS14) (Sus scrofa (Pig)).